We begin with the raw amino-acid sequence, 179 residues long: Large ribosomal subunit protein uL10 (179 aa).

Belongs to the universal ribosomal protein uL10 family. As to quaternary structure, part of the ribosomal stalk of the 50S ribosomal subunit. The N-terminus interacts with L11 and the large rRNA to form the base of the stalk. The C-terminus forms an elongated spine to which L12 dimers bind in a sequential fashion forming a multimeric L10(L12)X complex.

Forms part of the ribosomal stalk, playing a central role in the interaction of the ribosome with GTP-bound translation factors. This is Large ribosomal subunit protein uL10 from Kosmotoga olearia (strain ATCC BAA-1733 / DSM 21960 / TBF 19.5.1).